We begin with the raw amino-acid sequence, 266 residues long: Glutamate racemase (266 aa).

Residues 9–10 and 41–42 contribute to the substrate site; these read DS and YG. Cys-73 functions as the Proton donor/acceptor in the catalytic mechanism. 74-75 contacts substrate; the sequence is NT. Cys-183 functions as the Proton donor/acceptor in the catalytic mechanism. 184-185 is a binding site for substrate; that stretch reads TH.

Belongs to the aspartate/glutamate racemases family.

It catalyses the reaction L-glutamate = D-glutamate. The protein operates within cell wall biogenesis; peptidoglycan biosynthesis. Provides the (R)-glutamate required for cell wall biosynthesis. The polypeptide is Glutamate racemase (Shewanella woodyi (strain ATCC 51908 / MS32)).